We begin with the raw amino-acid sequence, 76 residues long: Small ribosomal subunit protein bS18 (76 aa).

It belongs to the bacterial ribosomal protein bS18 family. As to quaternary structure, part of the 30S ribosomal subunit. Forms a tight heterodimer with protein bS6.

Functionally, binds as a heterodimer with protein bS6 to the central domain of the 16S rRNA, where it helps stabilize the platform of the 30S subunit. The protein is Small ribosomal subunit protein bS18 of Tolumonas auensis (strain DSM 9187 / NBRC 110442 / TA 4).